The chain runs to 466 residues: 3-isopropylmalate dehydratase large subunit (466 aa).

[4Fe-4S] cluster-binding residues include C347, C407, and C410.

It belongs to the aconitase/IPM isomerase family. LeuC type 1 subfamily. As to quaternary structure, heterodimer of LeuC and LeuD. [4Fe-4S] cluster serves as cofactor.

It carries out the reaction (2R,3S)-3-isopropylmalate = (2S)-2-isopropylmalate. The protein operates within amino-acid biosynthesis; L-leucine biosynthesis; L-leucine from 3-methyl-2-oxobutanoate: step 2/4. Catalyzes the isomerization between 2-isopropylmalate and 3-isopropylmalate, via the formation of 2-isopropylmaleate. This Shigella flexneri protein is 3-isopropylmalate dehydratase large subunit.